The sequence spans 453 residues: MKLKTTLFGNVYQFKDVKEVLAKANELRSGDVLAGVAAASSQERVAAKQVLSEMTVADIRNNPVIAYEDDCVTRLIQDDVNETAYNQIKNWSISELREYVLSDETSVDDIAFTRKGLTSEVVAAVAKICSNADLIYGAKKMPVIKKANTTIGIPGTFSARLQPNDTRDDVQSIAAQIYEGLSFGVGDAVIGVNPVTDDVENLSRVLDTIYGVIDKFNIPTQGCVLAHVTTQIEAIRRGAPGGLIFQSICGSEKGLKEFGVELAMLDEARAVGAEFNRIAGENCLYFETGQGSALSAGANFGADQVTMEARNYGLARHYDPFIVNTVVGFIGPEYLYNDRQIIRAGLEDHFMGKLSGISMGCDCCYTNHADADQNLNENLMILLATAGCNYIMGMPLGDDIMLNYQTTAFHDTATVRQLLNLRPSPEFERWLESMGIMANGRLTKRAGDPSLFF.

Residues 160–162 and N193 contribute to the substrate site; that span reads RLQ. Adenosylcob(III)alamin-binding residues include P194 and Q246. E287 is a binding site for substrate. Residue S295 participates in adenosylcob(III)alamin binding. D362 is a substrate binding site. Position 401 (M401) interacts with adenosylcob(III)alamin.

Belongs to the EutB family. The basic unit is a heterodimer which dimerizes to form tetramers. The heterotetramers trimerize; 6 large subunits form a core ring with 6 small subunits projecting outwards. Adenosylcob(III)alamin serves as cofactor.

The protein localises to the bacterial microcompartment. It carries out the reaction ethanolamine = acetaldehyde + NH4(+). It functions in the pathway amine and polyamine degradation; ethanolamine degradation. Functionally, catalyzes the deamination of various vicinal amino-alcohols to oxo compounds. Allows this organism to utilize ethanolamine as the sole source of nitrogen and carbon in the presence of vitamin B12. This is Ethanolamine ammonia-lyase large subunit from Escherichia coli O157:H7.